The chain runs to 248 residues: UDP-2,3-diacylglucosamine hydrolase (248 aa).

5 residues coordinate Mn(2+): Asp7, His9, Asp40, Asn78, and His113. 78-79 (NR) serves as a coordination point for substrate. Substrate contacts are provided by Asp121, Ser159, Thr163, Lys166, and His194. Mn(2+)-binding residues include His194 and His196.

This sequence belongs to the LpxH family. Requires Mn(2+) as cofactor.

The protein resides in the cell inner membrane. The catalysed reaction is UDP-2-N,3-O-bis[(3R)-3-hydroxytetradecanoyl]-alpha-D-glucosamine + H2O = 2-N,3-O-bis[(3R)-3-hydroxytetradecanoyl]-alpha-D-glucosaminyl 1-phosphate + UMP + 2 H(+). It participates in glycolipid biosynthesis; lipid IV(A) biosynthesis; lipid IV(A) from (3R)-3-hydroxytetradecanoyl-[acyl-carrier-protein] and UDP-N-acetyl-alpha-D-glucosamine: step 4/6. In terms of biological role, hydrolyzes the pyrophosphate bond of UDP-2,3-diacylglucosamine to yield 2,3-diacylglucosamine 1-phosphate (lipid X) and UMP by catalyzing the attack of water at the alpha-P atom. Involved in the biosynthesis of lipid A, a phosphorylated glycolipid that anchors the lipopolysaccharide to the outer membrane of the cell. This chain is UDP-2,3-diacylglucosamine hydrolase, found in Pseudomonas fluorescens (strain Pf0-1).